A 587-amino-acid chain; its full sequence is Proteasome-associated ATPase (587 aa).

The stretch at 9–94 (ARKAQHDAEI…KEEVDRLAQP (86 aa)) forms a coiled coil. 276 to 281 (GCGKTL) contributes to the ATP binding site. Residues 586-587 (YL) are docks into pockets in the proteasome alpha-ring.

It belongs to the AAA ATPase family. As to quaternary structure, homohexamer. Assembles into a hexameric ring structure that caps the 20S proteasome core. Strongly interacts with the prokaryotic ubiquitin-like protein Pup through a hydrophobic interface; the interacting region of ARC lies in its N-terminal coiled-coil domain. There is one Pup binding site per ARC hexamer ring. Upon ATP-binding, the C-terminus of ARC interacts with the alpha-rings of the proteasome core, possibly by binding to the intersubunit pockets.

Its pathway is protein degradation; proteasomal Pup-dependent pathway. ATPase which is responsible for recognizing, binding, unfolding and translocation of pupylated proteins into the bacterial 20S proteasome core particle. May be essential for opening the gate of the 20S proteasome via an interaction with its C-terminus, thereby allowing substrate entry and access to the site of proteolysis. Thus, the C-termini of the proteasomal ATPase may function like a 'key in a lock' to induce gate opening and therefore regulate proteolysis. This is Proteasome-associated ATPase from Thermomonospora curvata (strain ATCC 19995 / DSM 43183 / JCM 3096 / KCTC 9072 / NBRC 15933 / NCIMB 10081 / Henssen B9).